The primary structure comprises 82 residues: Translational regulator CsrA (82 aa).

This sequence belongs to the CsrA/RsmA family. As to quaternary structure, homodimer; the beta-strands of each monomer intercalate to form a hydrophobic core, while the alpha-helices form wings that extend away from the core.

It is found in the cytoplasm. A translational regulator that binds mRNA to regulate translation initiation and/or mRNA stability. Usually binds in the 5'-UTR at or near the Shine-Dalgarno sequence preventing ribosome-binding, thus repressing translation. Its main target seems to be the major flagellin gene, while its function is anatagonized by FliW. This is Translational regulator CsrA from Brachyspira hyodysenteriae (strain ATCC 49526 / WA1).